A 215-amino-acid chain; its full sequence is Thiamine-phosphate synthase 1 (215 aa).

4-amino-2-methyl-5-(diphosphooxymethyl)pyrimidine is bound by residues 35–39 (QYRFE) and Asn-67. Residues Asp-68 and Asp-87 each coordinate Mg(2+). Position 106 (Thr-106) interacts with 4-amino-2-methyl-5-(diphosphooxymethyl)pyrimidine. 132–134 (TST) lines the 2-[(2R,5Z)-2-carboxy-4-methylthiazol-5(2H)-ylidene]ethyl phosphate pocket. Residue Lys-135 coordinates 4-amino-2-methyl-5-(diphosphooxymethyl)pyrimidine. Gly-162 provides a ligand contact to 2-[(2R,5Z)-2-carboxy-4-methylthiazol-5(2H)-ylidene]ethyl phosphate.

It belongs to the thiamine-phosphate synthase family. Mg(2+) is required as a cofactor.

It catalyses the reaction 2-[(2R,5Z)-2-carboxy-4-methylthiazol-5(2H)-ylidene]ethyl phosphate + 4-amino-2-methyl-5-(diphosphooxymethyl)pyrimidine + 2 H(+) = thiamine phosphate + CO2 + diphosphate. It carries out the reaction 2-(2-carboxy-4-methylthiazol-5-yl)ethyl phosphate + 4-amino-2-methyl-5-(diphosphooxymethyl)pyrimidine + 2 H(+) = thiamine phosphate + CO2 + diphosphate. The enzyme catalyses 4-methyl-5-(2-phosphooxyethyl)-thiazole + 4-amino-2-methyl-5-(diphosphooxymethyl)pyrimidine + H(+) = thiamine phosphate + diphosphate. The protein operates within cofactor biosynthesis; thiamine diphosphate biosynthesis; thiamine phosphate from 4-amino-2-methyl-5-diphosphomethylpyrimidine and 4-methyl-5-(2-phosphoethyl)-thiazole: step 1/1. In terms of biological role, condenses 4-methyl-5-(beta-hydroxyethyl)thiazole monophosphate (THZ-P) and 2-methyl-4-amino-5-hydroxymethyl pyrimidine pyrophosphate (HMP-PP) to form thiamine monophosphate (TMP). This chain is Thiamine-phosphate synthase 1, found in Aquifex aeolicus (strain VF5).